Reading from the N-terminus, the 217-residue chain is MKIVIADDHAVVRTGFSMILNFQDDMEVVDTAADGVEAYQKVMQHQPDVLIMDLSMPPGESGLIATSKIVESFPDTKILILTMYDDEEYLFHVLRNGAKGYILKNAPDEQLISAVRTVYRGDTYIDPKMTTSLVNEFVNNTGQDANSTNDPFRILSKRELEILPLIAKGYGNKEIAEKLFVSVKTVEAHKTHIMQKLNLKSKPELVEYALKKKLLDF.

The 118-residue stretch at 2 to 119 (KIVIADDHAV…QLISAVRTVY (118 aa)) folds into the Response regulatory domain. At Asp-53 the chain carries 4-aspartylphosphate. In terms of domain architecture, HTH luxR-type spans 148 to 213 (TNDPFRILSK…ELVEYALKKK (66 aa)). Positions 172–191 (NKEIAEKLFVSVKTVEAHKT) form a DNA-binding region, H-T-H motif.

Post-translationally, phosphorylated by NreB.

Its subcellular location is the cytoplasm. In terms of biological role, member of the two-component regulatory system NreB/NreC involved in the control of dissimilatory nitrate/nitrite reduction in response to oxygen. Phosphorylated NreC binds to a GC-rich palindromic sequence at the promoters of the nitrate (narGHJI) and nitrite (nir) reductase operons, as well as the putative nitrate transporter gene narT, and activates their expression. This chain is Oxygen regulatory protein NreC (nreC), found in Staphylococcus carnosus (strain TM300).